The following is a 271-amino-acid chain: Vacuolar arginine/histidine antiporter stm1 (271 aa).

One can recognise a PQ-loop 1 domain in the interval 14-80 (LTELSSFLGA…GNVSSTVLVL (67 aa)). The next 3 membrane-spanning stretches (helical) occupy residues 17-37 (LSSF…IPQL), 49-69 (ISDL…LGSI), and 77-97 (VLVL…QIYY). Residue Ser119 is modified to Phosphoserine. A run of 4 helical transmembrane segments spans residues 144 to 164 (FGVM…IISS), 178 to 198 (PFTA…PQII), 211 to 231 (IIFF…ILVF), and 245 to 265 (PWIL…YQFI). One can recognise a PQ-loop 2 domain in the interval 185 to 239 (SSVLYFCARIPQIIKNHKAKSTEGLSIIFFVLASVGNTSYAFSILVFPASDYLNY).

This sequence belongs to the laat-1 family.

It is found in the vacuole membrane. The catalysed reaction is L-histidine(out) + L-arginine(in) = L-histidine(in) + L-arginine(out). Functionally, amino acid transporter that moves basic amino acids across the vacuolar membrane. Appears to function as an arginine/histidine antiporter. The chain is Vacuolar arginine/histidine antiporter stm1 (stm1) from Schizosaccharomyces pombe (strain 972 / ATCC 24843) (Fission yeast).